The primary structure comprises 329 residues: Eukaryotic translation initiation factor 2 subunit 1 (329 aa).

An S1 motif domain is found at 24–95 (DDLIMVKVNR…QKGYIDLSKR (72 aa)). S59 is subject to Phosphoserine; by eIK1, eIK2 and PK4. Residues 291-329 (LDKHDGISSDDDDYNTSDEDDENSSEEDENTSEDEEEED) are disordered. A compositionally biased stretch (acidic residues) spans 298 to 329 (SSDDDDYNTSDEDDENSSEEDENTSEDEEEED).

This sequence belongs to the eIF-2-alpha family. In terms of processing, phosphorylated at Ser-59 by eIK1 in response to amino acid starvation. Phosphorylates at Ser-59 in schizonts and gametocytes but not in rings and young trophozoites. Phosphorylates at Ser-59 by eIK2 in salivary gland sporozoites but not in midgut and hemocoel sporozoites. Dephosphorylated at Ser-59 by UIS2. Phosphorylation of eIF2alpha subunit of the pre-initiation complex eIF2 inhibits recycling of inactive eIF2-GDP to active eIF2-GTP by limiting the activity of the guanine nucleotide exchange factor eIF2B and thus, inhibits protein translation.

It is found in the cytoplasm. The protein resides in the stress granule. In terms of biological role, functions in the early steps of protein synthesis by forming a ternary complex with GTP and initiator tRNA. May regulate protein translation in response to amino acid starvation. May regulate protein at various stages of parasite development. This chain is Eukaryotic translation initiation factor 2 subunit 1, found in Plasmodium falciparum (isolate 3D7).